The primary structure comprises 310 residues: GTPase Era (310 aa).

In terms of domain architecture, Era-type G spans 17 to 184 (HSGFVALIGA…LDYLAQALPA (168 aa)). Residues 25-32 (GAPNAGKS) are G1. 25 to 32 (GAPNAGKS) contributes to the GTP binding site. Positions 51–55 (QTTRA) are G2. Residues 72 to 75 (DTPG) form a G3 region. GTP-binding positions include 72 to 76 (DTPGI) and 134 to 137 (NKVD). The tract at residues 134-137 (NKVD) is G4. Residues 163–165 (VSA) form a G5 region. The 78-residue stretch at 215–292 (LHQELPYSSH…HLFLFVKVRE (78 aa)) folds into the KH type-2 domain.

This sequence belongs to the TRAFAC class TrmE-Era-EngA-EngB-Septin-like GTPase superfamily. Era GTPase family. As to quaternary structure, monomer.

Its subcellular location is the cytoplasm. The protein localises to the cell inner membrane. Its function is as follows. An essential GTPase that binds both GDP and GTP, with rapid nucleotide exchange. Plays a role in 16S rRNA processing and 30S ribosomal subunit biogenesis and possibly also in cell cycle regulation and energy metabolism. The protein is GTPase Era of Mesorhizobium japonicum (strain LMG 29417 / CECT 9101 / MAFF 303099) (Mesorhizobium loti (strain MAFF 303099)).